Consider the following 383-residue polypeptide: 3-ketosteroid-9-alpha-monooxygenase, oxygenase component (383 aa).

In terms of domain architecture, Rieske spans 24-126; the sequence is WHCLGPVKNF…TDVRGGLLFV (103 aa). Positions 65, 67, 84, and 87 each coordinate [2Fe-2S] cluster. Residues Asn173, His179, His184, and Asp302 each coordinate Fe cation.

In terms of assembly, homotrimer. The two-component system 3-ketosteroid-9-alpha-monooxygenase is composed of an oxygenase component KshA and a reductase component KshB. [2Fe-2S] cluster is required as a cofactor. Fe cation serves as cofactor.

It catalyses the reaction androsta-1,4-diene-3,17-dione + 2 reduced [2Fe-2S]-[ferredoxin] + O2 + 2 H(+) = 9alpha-hydroxyandrosta-1,4-diene-3,17-dione + 2 oxidized [2Fe-2S]-[ferredoxin] + H2O. It participates in lipid metabolism; steroid biosynthesis. Involved in the degradation of cholesterol. Catalyzes the introduction of a 9a-hydroxyl moiety into 1,4-androstadiene-3,17-dione (ADD) to yield the 9alpha-hydroxy-1,4-androstadiene-3,17-dione (9OHADD) intermediate which spontaneously form 3-hydroxy-9,10-seconandrost-1,3,5(10)-triene-9,17-dione (HSA) via the meta-cleavage of ring B with concomitant aromatization of ring A. This is 3-ketosteroid-9-alpha-monooxygenase, oxygenase component (kshA) from Mycolicibacterium smegmatis (strain ATCC 700084 / mc(2)155) (Mycobacterium smegmatis).